A 606-amino-acid polypeptide reads, in one-letter code: Endonuclease 8-like 3 (606 aa).

Val-2 functions as the Schiff-base intermediate with DNA; via amino nitrogen in the catalytic mechanism. DNA contacts are provided by Asn-193 and Arg-272. An FPG-type zinc finger spans residues Lys-248–Lys-282. The RanBP2-type zinc-finger motif lies at Ser-318–Leu-347. Ser-451 is subject to Phosphoserine. The segment covering Lys-479–Arg-494 has biased composition (polar residues). Residues Lys-479–Pro-506 form a disordered region. The Zn(2+) site is built by Cys-508, His-511, Cys-534, Cys-542, Cys-555, His-557, Cys-580, and Cys-588. GRF-type zinc fingers lie at residues Cys-508 to Ser-551 and Cys-555 to Gly-597.

Belongs to the FPG family. In terms of tissue distribution, expressed in testis, thymus, spleen and bone marrow. In young mice, expressed at higher levels in thymocytes than splenocytes. At 12 dpc, abundant in the subventricular zone (SVZ) of the lateral ventricles. At 17.5 dpc and P0, expression is limited to distinct cells in the cortical SVZ, in cells of the secondary matrix, the dentate gyrus migratory route and the dentate gyrus.

It is found in the nucleus. Its subcellular location is the chromosome. The catalysed reaction is 2'-deoxyribonucleotide-(2'-deoxyribose 5'-phosphate)-2'-deoxyribonucleotide-DNA = a 3'-end 2'-deoxyribonucleotide-(2,3-dehydro-2,3-deoxyribose 5'-phosphate)-DNA + a 5'-end 5'-phospho-2'-deoxyribonucleoside-DNA + H(+). In terms of biological role, DNA glycosylase which prefers single-stranded DNA (ssDNA), or partially ssDNA structures such as bubble and fork structures, to double-stranded DNA (dsDNA). Mediates interstrand cross-link repair in response to replication stress: acts by mediating DNA glycosylase activity, cleaving one of the two N-glycosyl bonds comprising the interstrand cross-link, which avoids the formation of a double-strand break but generates an abasic site that is bypassed by translesion synthesis polymerases. In vitro, displays strong glycosylase activity towards the hydantoin lesions spiroiminodihydantoin (Sp) and guanidinohydantoin (Gh) in both ssDNA and dsDNA; also recognizes FapyA, FapyG, 5-OHU, 5-OHC, 5-OHMH, Tg and 8-oxoA lesions in ssDNA. No activity on 8-oxoG detected. Also shows weak DNA-(apurinic or apyrimidinic site) lyase activity. In vivo, appears to be the primary enzyme involved in removing Sp and Gh from ssDNA in neonatal tissues. The protein is Endonuclease 8-like 3 (Neil3) of Mus musculus (Mouse).